A 615-amino-acid polypeptide reads, in one-letter code: Threonine--tRNA ligase (615 aa).

Residues 1 to 132 (MRILQLHCDR…PLAEGFKVIT (132 aa)) form an editing domain region. Positions 196 to 495 (PHVALMKRMG…SARGTKPELP (300 aa)) are catalytic. Zn(2+) contacts are provided by Cys288, His340, and His464.

Belongs to the class-II aminoacyl-tRNA synthetase family. As to quaternary structure, homodimer. Zn(2+) serves as cofactor.

The protein resides in the cytoplasm. The enzyme catalyses tRNA(Thr) + L-threonine + ATP = L-threonyl-tRNA(Thr) + AMP + diphosphate + H(+). Catalyzes the attachment of threonine to tRNA(Thr) in a two-step reaction: L-threonine is first activated by ATP to form Thr-AMP and then transferred to the acceptor end of tRNA(Thr). Also edits incorrectly charged L-seryl-tRNA(Thr). The sequence is that of Threonine--tRNA ligase (thrS) from Cenarchaeum symbiosum (strain A).